We begin with the raw amino-acid sequence, 492 residues long: 2,3-bisphosphoglycerate-independent phosphoglycerate mutase (492 aa).

Mn(2+)-binding residues include D11 and S61. S61 acts as the Phosphoserine intermediate in catalysis. Substrate-binding positions include H118, 147–148 (RD), R178, R184, 248–251 (RNDR), and K320. Residues D386, H390, D427, H428, and H445 each coordinate Mn(2+).

Belongs to the BPG-independent phosphoglycerate mutase family. In terms of assembly, monomer. It depends on Mn(2+) as a cofactor.

It catalyses the reaction (2R)-2-phosphoglycerate = (2R)-3-phosphoglycerate. The protein operates within carbohydrate degradation; glycolysis; pyruvate from D-glyceraldehyde 3-phosphate: step 3/5. Functionally, catalyzes the interconversion of 2-phosphoglycerate and 3-phosphoglycerate. This is 2,3-bisphosphoglycerate-independent phosphoglycerate mutase from Campylobacter jejuni subsp. doylei (strain ATCC BAA-1458 / RM4099 / 269.97).